A 372-amino-acid chain; its full sequence is L-selectin (372 aa).

The first 28 residues, Met-1–Cys-28, serve as a signal peptide directing secretion. The propeptide occupies Asp-29–Cys-38. Residues Trp-39–Asn-332 lie on the Extracellular side of the membrane. Positions Arg-55 to Cys-155 constitute a C-type lectin domain. 10 disulfides stabilise this stretch: Cys-57/Cys-155, Cys-128/Cys-147, Cys-128/Cys-160, Cys-160/Cys-171, Cys-165/Cys-180, Cys-182/Cys-191, Cys-197/Cys-241, Cys-227/Cys-254, Cys-259/Cys-303, and Cys-289/Cys-316. N-linked (GlcNAc...) asparagine glycosylation is found at Asn-60 and Asn-104. 5 residues coordinate Ca(2+): Glu-118, Asn-120, Glu-126, Asn-143, and Asp-144. In terms of domain architecture, EGF-like spans Tyr-156–Gln-192. A glycan (N-linked (GlcNAc...) asparagine) is linked at Asn-177. Sushi domains lie at Ile-195 to Val-256 and Ile-257 to Lys-318. Residues Asn-216, Asn-226, Asn-232, Asn-246, and Asn-271 are each glycosylated (N-linked (GlcNAc...) asparagine). A helical membrane pass occupies residues Pro-333–Ala-355. Over Arg-356–Tyr-372 the chain is Cytoplasmic.

Belongs to the selectin/LECAM family. In terms of assembly, interaction with SELPLG/PSGL1 and PODXL2 is required for promoting recruitment and rolling of leukocytes. This interaction is dependent on the sialyl Lewis X glycan modification of SELPLG and PODXL2, and tyrosine sulfation modifications of SELPLG. Sulfation on 'Tyr-51' of SELPLG is important for L-selectin binding. N-glycosylated.

It is found in the cell membrane. Its function is as follows. Calcium-dependent lectin that mediates cell adhesion by binding to glycoproteins on neighboring cells. Mediates the adherence of lymphocytes to endothelial cells of high endothelial venules in peripheral lymph nodes. Promotes initial tethering and rolling of leukocytes in endothelia. This is L-selectin (SELL) from Pongo pygmaeus (Bornean orangutan).